A 260-amino-acid chain; its full sequence is Fibronectin type III domain-containing protein 5 (260 aa).

A disordered region spans residues 1–56 (MQAARGGAGRPERPGRPGRGPERERERPPGAGAASPCAAPGLPAGGATIHPGSPSA). Residues 10-28 (RPERPGRPGRGPERERERP) are compositionally biased toward basic and acidic residues. Residues 29–56 (PGAGAASPCAAPGLPAGGATIHPGSPSA) show a composition bias toward low complexity. One can recognise a Fibronectin type-III domain in the interval 84–175 (APVNVTVRHL…EPVLFKTPRE (92 aa)). Asn87 and Asn132 each carry an N-linked (GlcNAc...) asparagine glycan. A helical membrane pass occupies residues 201–221 (GEVLIIVVVLFMWAGVIALFC). The span at 230-241 (NEPNNNKEKTKS) shows a compositional bias: basic and acidic residues. The interval 230–260 (NEPNNNKEKTKSASETSTPEHQGGGLLRSKI) is disordered. A compositionally biased stretch (gly residues) spans 251–260 (QGGGLLRSKI). The Microbody targeting signal signature appears at 258-260 (SKI).

In terms of assembly, dimer; may exist in other oligomeric forms. The extracellular domain is cleaved and released from the cell membrane. In terms of processing, N-Glycosylated. As to expression, widely expressed, with highest levels in heart. Very low expression, if any, in colon, pancreas and spleen.

It is found in the cell membrane. It localises to the peroxisome membrane. The protein resides in the secreted. Functionally, mediates beneficial effects of muscular exercise. Induces browning of white adipose tissue by stimulating UCP1 expression, at least in part, via the nuclear receptor PPARA. The protein is Fibronectin type III domain-containing protein 5 (FNDC5) of Homo sapiens (Human).